The primary structure comprises 558 residues: CTP synthase (558 aa).

Residues 1–271 form an amidoligase domain region; that stretch reads MAARQQTKHL…DAYVVRRLGL (271 aa). Position 18 (serine 18) interacts with CTP. UTP is bound at residue serine 18. ATP contacts are provided by residues 19–24 and aspartate 76; that span reads SLGKGL. The Mg(2+) site is built by aspartate 76 and glutamate 145. CTP is bound by residues 152 to 154, 192 to 197, and lysine 228; these read DIE and KTKPTQ. UTP is bound by residues 192 to 197 and lysine 228; that span reads KTKPTQ. The region spanning 296–545 is the Glutamine amidotransferase type-1 domain; sequence TIALVGKYVD…IRAALLHRCP (250 aa). Glycine 359 is an L-glutamine binding site. Cysteine 386 acts as the Nucleophile; for glutamine hydrolysis in catalysis. Residues 387–390, glutamate 410, and arginine 471 contribute to the L-glutamine site; that span reads LGLQ. Active-site residues include histidine 518 and glutamate 520.

Belongs to the CTP synthase family. As to quaternary structure, homotetramer.

It catalyses the reaction UTP + L-glutamine + ATP + H2O = CTP + L-glutamate + ADP + phosphate + 2 H(+). It carries out the reaction L-glutamine + H2O = L-glutamate + NH4(+). The enzyme catalyses UTP + NH4(+) + ATP = CTP + ADP + phosphate + 2 H(+). The protein operates within pyrimidine metabolism; CTP biosynthesis via de novo pathway; CTP from UDP: step 2/2. Allosterically activated by GTP, when glutamine is the substrate; GTP has no effect on the reaction when ammonia is the substrate. The allosteric effector GTP functions by stabilizing the protein conformation that binds the tetrahedral intermediate(s) formed during glutamine hydrolysis. Inhibited by the product CTP, via allosteric rather than competitive inhibition. Functionally, catalyzes the ATP-dependent amination of UTP to CTP with either L-glutamine or ammonia as the source of nitrogen. Regulates intracellular CTP levels through interactions with the four ribonucleotide triphosphates. This chain is CTP synthase, found in Acidothermus cellulolyticus (strain ATCC 43068 / DSM 8971 / 11B).